Here is a 285-residue protein sequence, read N- to C-terminus: Inositol oxygenase (285 aa).

Arginine 29 contacts substrate. Serine 33 is subject to Phosphoserine. 85 to 87 (DES) contacts substrate. The Fe cation site is built by histidine 98, histidine 123, and aspartate 124. Residues lysine 127 and 141 to 142 (GD) each bind substrate. Fe cation is bound by residues histidine 194, histidine 220, and aspartate 253. 220–221 (HS) is a binding site for substrate.

Belongs to the myo-inositol oxygenase family. Fe cation is required as a cofactor. Kidney specific.

Its subcellular location is the cytoplasm. The enzyme catalyses myo-inositol + O2 = D-glucuronate + H2O + H(+). It participates in polyol metabolism; myo-inositol degradation into D-glucuronate; D-glucuronate from myo-inositol: step 1/1. In Homo sapiens (Human), this protein is Inositol oxygenase (MIOX).